Here is a 235-residue protein sequence, read N- to C-terminus: RNA pyrophosphohydrolase (235 aa).

A Nudix hydrolase domain is found at 6-149 (GFRPNVGIIL…KRGVYEMALT (144 aa)). A Nudix box motif is present at residues 38–59 (GGIDRGENPEQAMFRELHEEVG). The tract at residues 184-235 (ANQSGEPGSFPAAGGIPSYATRPGAPFELPPGATFEPDPQTSFGVNAPTKKT) is disordered.

It belongs to the Nudix hydrolase family. RppH subfamily. The cofactor is a divalent metal cation.

Accelerates the degradation of transcripts by removing pyrophosphate from the 5'-end of triphosphorylated RNA, leading to a more labile monophosphorylated state that can stimulate subsequent ribonuclease cleavage. This is RNA pyrophosphohydrolase from Polaromonas naphthalenivorans (strain CJ2).